We begin with the raw amino-acid sequence, 289 residues long: Phosphatidylglycerol--prolipoprotein diacylglyceryl transferase (289 aa).

The next 7 membrane-spanning stretches (helical) occupy residues leucine 17–glycine 37, methionine 57–tyrosine 77, isoleucine 89–alanine 109, tryptophan 121–isoleucine 141, glutamine 174–alanine 194, glycine 200–phenylalanine 220, and isoleucine 235–tryptophan 255. Arginine 140 is an a 1,2-diacyl-sn-glycero-3-phospho-(1'-sn-glycerol) binding site.

This sequence belongs to the Lgt family.

The protein resides in the cell inner membrane. It carries out the reaction L-cysteinyl-[prolipoprotein] + a 1,2-diacyl-sn-glycero-3-phospho-(1'-sn-glycerol) = an S-1,2-diacyl-sn-glyceryl-L-cysteinyl-[prolipoprotein] + sn-glycerol 1-phosphate + H(+). The protein operates within protein modification; lipoprotein biosynthesis (diacylglyceryl transfer). Catalyzes the transfer of the diacylglyceryl group from phosphatidylglycerol to the sulfhydryl group of the N-terminal cysteine of a prolipoprotein, the first step in the formation of mature lipoproteins. In Nitrosospira multiformis (strain ATCC 25196 / NCIMB 11849 / C 71), this protein is Phosphatidylglycerol--prolipoprotein diacylglyceryl transferase.